The primary structure comprises 364 residues: UDP-N-acetylglucosamine--N-acetylmuramyl-(pentapeptide) pyrophosphoryl-undecaprenol N-acetylglucosamine transferase 1 (364 aa).

UDP-N-acetyl-alpha-D-glucosamine is bound by residues 10–12, N124, S195, I250, and Q295; that span reads TGG.

The protein belongs to the glycosyltransferase 28 family. MurG subfamily.

The protein localises to the cell membrane. It carries out the reaction di-trans,octa-cis-undecaprenyl diphospho-N-acetyl-alpha-D-muramoyl-L-alanyl-D-glutamyl-meso-2,6-diaminopimeloyl-D-alanyl-D-alanine + UDP-N-acetyl-alpha-D-glucosamine = di-trans,octa-cis-undecaprenyl diphospho-[N-acetyl-alpha-D-glucosaminyl-(1-&gt;4)]-N-acetyl-alpha-D-muramoyl-L-alanyl-D-glutamyl-meso-2,6-diaminopimeloyl-D-alanyl-D-alanine + UDP + H(+). It participates in cell wall biogenesis; peptidoglycan biosynthesis. Functionally, cell wall formation. Catalyzes the transfer of a GlcNAc subunit on undecaprenyl-pyrophosphoryl-MurNAc-pentapeptide (lipid intermediate I) to form undecaprenyl-pyrophosphoryl-MurNAc-(pentapeptide)GlcNAc (lipid intermediate II). This chain is UDP-N-acetylglucosamine--N-acetylmuramyl-(pentapeptide) pyrophosphoryl-undecaprenol N-acetylglucosamine transferase 1, found in Bacillus cereus (strain ATCC 14579 / DSM 31 / CCUG 7414 / JCM 2152 / NBRC 15305 / NCIMB 9373 / NCTC 2599 / NRRL B-3711).